A 103-amino-acid polypeptide reads, in one-letter code: MILDEFVEIANLLEIYSSLLSEKQKEYLEDHFENDLSLSEIAKNNNVSRQAIYDNIKRGVALLYDYEDKLKFYQMKKNIRKELVDLKEDFTKENLEKIIENLL.

The protein belongs to the UPF0122 family.

Might take part in the signal recognition particle (SRP) pathway. This is inferred from the conservation of its genetic proximity to ftsY/ffh. May be a regulatory protein. The chain is UPF0122 protein FN1394 from Fusobacterium nucleatum subsp. nucleatum (strain ATCC 25586 / DSM 15643 / BCRC 10681 / CIP 101130 / JCM 8532 / KCTC 2640 / LMG 13131 / VPI 4355).